Consider the following 1124-residue polypeptide: Transient-receptor-potential-like protein (1124 aa).

Positions 1 to 24 (MGRKKKLPTGVSSGVSHASSAPKS) are disordered. Topologically, residues 1–340 (MGRKKKLPTG…GFRRKSIVDK (340 aa)) are cytoplasmic. A compositionally biased stretch (low complexity) spans 10-21 (GVSSGVSHASSA). ANK repeat units lie at residues 40–69 (LEEK…RHQH), 78–107 (LGRR…ETKD), and 152–181 (PDIT…AVPV). The helical transmembrane segment at 341 to 361 (VICIAQVAVLFPLYCLIYMCA) threads the bilayer. Residues 362 to 373 (PNCRTGQLMRKP) lie on the Extracellular side of the membrane. Residues 374–394 (FMKFLIHASSYLFFLFILILV) traverse the membrane as a helical segment. The Cytoplasmic portion of the chain corresponds to 395 to 431 (SQRADDDFVRIFGTTRMKKELAEQELRQRGQTPSKLE). Residues 432 to 452 (LIVVMYVIGFVWEEVQEIFAV) traverse the membrane as a helical segment. Topologically, residues 453-512 (GMKSYLRNMWNFIDFLRNSLYVSVMCLRAFAYIQQATEIARDPQMAYIPREKWHDFDPQL) are extracellular. Residues 513–533 (IAEGLFAAANVFSALKLVHLF) form a helical membrane-spanning segment. Topologically, residues 534–548 (SINPHLGPLQISLGR) are cytoplasmic. A helical membrane pass occupies residues 549-569 (MVIDIVKFFFIYTLVLFAFAC). Residues 570 to 645 (GLNQLLWYFA…GIKSYTRFWG (76 aa)) lie on the Extracellular side of the membrane. Residues 646–666 (LLMFGSYSVINVIVLLNLLIA) traverse the membrane as a helical segment. At 667–1124 (MMSNSYAMID…TSPQRPKHRN (458 aa)) the chain is on the cytoplasmic side. Calmodulin-binding regions lie at residues 710 to 728 (SVKW…IDRQ) and 853 to 895 (IPSK…SQIG). Disordered regions lie at residues 978 to 1013 (RAMA…GVSH) and 1031 to 1124 (LIAN…KHRN). Residues 1035-1063 (SAPSAPTAPPKKSAPTAPTPTYKPTTHAP) are compositionally biased toward low complexity. Basic and acidic residues-rich tracts occupy residues 1069-1081 (GNRE…DGVR) and 1090-1106 (HVVD…RDNV). Positions 1107 to 1118 (SDISSIASTSPQ) are enriched in polar residues.

This sequence belongs to the transient receptor (TC 1.A.4) family. STrpC subfamily. Forms heteromultimers with Trpgamma and, to a lower extent, with trp. Interacts with Fkbp59 in vivo and is found in the inaD signaling complex. Expressed predominantly in the rhabdomeres of photoreceptor cells.

It localises to the membrane. Its subcellular location is the cell projection. The protein localises to the rhabdomere membrane. In terms of biological role, a light-sensitive calcium channel that is required for inositide-mediated Ca(2+) entry in the retina during phospholipase C (PLC)-mediated phototransduction. Required for vision in the dark and in dim light. Binds calmodulin. Trp and trpl act together in the light response, although it is unclear whether as heteromultimers or distinct units. Also forms a functional cation channel with Trpgamma. Activated by fatty acids, metabolic stress, inositols and GTP-binding proteins. The chain is Transient-receptor-potential-like protein (trpl) from Drosophila melanogaster (Fruit fly).